Here is a 244-residue protein sequence, read N- to C-terminus: Triosephosphate isomerase (244 aa).

8 to 10 contributes to the substrate binding site; sequence NWK. Histidine 93 (electrophile) is an active-site residue. The active-site Proton acceptor is the glutamate 161. Residues glycine 167, serine 206, and 227–228 contribute to the substrate site; that span reads GG.

This sequence belongs to the triosephosphate isomerase family. Homodimer.

The protein resides in the cytoplasm. The catalysed reaction is D-glyceraldehyde 3-phosphate = dihydroxyacetone phosphate. The protein operates within carbohydrate biosynthesis; gluconeogenesis. It participates in carbohydrate degradation; glycolysis; D-glyceraldehyde 3-phosphate from glycerone phosphate: step 1/1. Functionally, involved in the gluconeogenesis. Catalyzes stereospecifically the conversion of dihydroxyacetone phosphate (DHAP) to D-glyceraldehyde-3-phosphate (G3P). The sequence is that of Triosephosphate isomerase from Deinococcus radiodurans (strain ATCC 13939 / DSM 20539 / JCM 16871 / CCUG 27074 / LMG 4051 / NBRC 15346 / NCIMB 9279 / VKM B-1422 / R1).